A 219-amino-acid polypeptide reads, in one-letter code: HTH-type transcriptional regulator LutR (219 aa).

The HTH gntR-type domain occupies 1–56; sequence MIKNGELKPGDKLDSVQALAESFQVSRSAVREALSALKAMGLVEMKQGEGTYLKEF. The segment at residues 16-35 is a DNA-binding region (H-T-H motif); it reads VQALAESFQVSRSAVREALS.

Negatively regulates the transcription of the lutABC operon, which is required for L-lactate utilization. LutR activity is regulated by lactate, since presence of L-lactate, that probably binds to LutR, leads to derepression of the operon. Also appears to be essential for bacilysin biosynthesis. The chain is HTH-type transcriptional regulator LutR (lutR) from Bacillus subtilis (strain 168).